Reading from the N-terminus, the 360-residue chain is UPF0324 membrane protein plu2856 (360 aa).

The next 9 membrane-spanning stretches (helical) occupy residues 20 to 42 (LIPGLILAAILTAISIYAGNIPW), 47 to 69 (GLGTLTLAILAGIIVGNTVYPLL), 104 to 126 (VGITGLLIDAAMLSSTFFIAIWL), 136 to 155 (QTVILIGAGSSICGAAAIMA), 167 to 189 (VAVAVSTIVIFGTIAIFIYPWFY), 239 to 256 (MIRVMMLAPFLLLLSRYI), 277 to 299 (WFAVIFIAIAGFNSFNLLPAAIV), 304 to 326 (NIDTIMLTMAMGALGLTTHVSAI), and 333 to 355 (PILLALILFVWLMAGGLLINLGI).

This sequence belongs to the UPF0324 family.

It localises to the cell membrane. The sequence is that of UPF0324 membrane protein plu2856 from Photorhabdus laumondii subsp. laumondii (strain DSM 15139 / CIP 105565 / TT01) (Photorhabdus luminescens subsp. laumondii).